A 173-amino-acid polypeptide reads, in one-letter code: 3-hydroxydecanoyl-[acyl-carrier-protein] dehydratase (173 aa).

Residue H71 is part of the active site.

This sequence belongs to the thioester dehydratase family. FabA subfamily. As to quaternary structure, homodimer.

It localises to the cytoplasm. The enzyme catalyses a (3R)-hydroxyacyl-[ACP] = a (2E)-enoyl-[ACP] + H2O. It carries out the reaction (3R)-hydroxydecanoyl-[ACP] = (2E)-decenoyl-[ACP] + H2O. The catalysed reaction is (2E)-decenoyl-[ACP] = (3Z)-decenoyl-[ACP]. It participates in lipid metabolism; fatty acid biosynthesis. In terms of biological role, necessary for the introduction of cis unsaturation into fatty acids. Catalyzes the dehydration of (3R)-3-hydroxydecanoyl-ACP to E-(2)-decenoyl-ACP and then its isomerization to Z-(3)-decenoyl-ACP. Can catalyze the dehydratase reaction for beta-hydroxyacyl-ACPs with saturated chain lengths up to 16:0, being most active on intermediate chain length. This chain is 3-hydroxydecanoyl-[acyl-carrier-protein] dehydratase, found in Bradyrhizobium diazoefficiens (strain JCM 10833 / BCRC 13528 / IAM 13628 / NBRC 14792 / USDA 110).